Reading from the N-terminus, the 247-residue chain is Uridylate kinase (247 aa).

Lys-17 to Gly-20 serves as a coordination point for ATP. Gly-59 provides a ligand contact to UMP. 2 residues coordinate ATP: Gly-60 and Arg-64. UMP contacts are provided by residues Asp-79 and Thr-140–Thr-147. Residues Thr-167, Tyr-173, and Asp-176 each contribute to the ATP site.

Belongs to the UMP kinase family. Homohexamer.

It is found in the cytoplasm. It carries out the reaction UMP + ATP = UDP + ADP. Its pathway is pyrimidine metabolism; CTP biosynthesis via de novo pathway; UDP from UMP (UMPK route): step 1/1. Inhibited by UTP. Catalyzes the reversible phosphorylation of UMP to UDP. The sequence is that of Uridylate kinase from Legionella pneumophila subsp. pneumophila (strain Philadelphia 1 / ATCC 33152 / DSM 7513).